A 379-amino-acid chain; its full sequence is Salicylate/benzoate carboxyl methyltransferase (379 aa).

Residue Tyr40 coordinates S-adenosyl-L-homocysteine. Gln47 serves as a coordination point for salicylate. S-adenosyl-L-homocysteine is bound by residues Cys82, Asn87, Asp119, Leu120, Ser155, and Phe156. 2 residues coordinate salicylate: His176 and Trp177. Mg(2+)-binding residues include Asn188, Asp275, Phe277, and Asn278.

Belongs to the methyltransferase superfamily. Type-7 methyltransferase family. SABATH subfamily. As to quaternary structure, homodimer. Mg(2+) serves as cofactor. As to expression, expressed in flowers and at lower levels in leaves and stems. Hardly detected in roots and siliques. Expressed in the sepals and the leaf trichomes and hydathodes.

The enzyme catalyses benzoate + S-adenosyl-L-methionine = methyl benzoate + S-adenosyl-L-homocysteine. The catalysed reaction is salicylate + S-adenosyl-L-methionine = methyl salicylate + S-adenosyl-L-homocysteine. Its function is as follows. Methyltransferase involved in the biosynthesis of methylsalicylate in response to stresses. Utilizes salicylic acid (SA) more efficiently than benzoic acid (BA). Can also use anthranilic acid and m-hydroxybenzoic acid as substrate. The protein is Salicylate/benzoate carboxyl methyltransferase (BSMT1) of Arabidopsis thaliana (Mouse-ear cress).